Reading from the N-terminus, the 68-residue chain is Galectin-10 (68 aa).

A Galectin domain is found at 1-68; it reads EPYLQVDFHT…LSISVLPDKY (68 aa).

Interacts with CEL.

The protein resides in the cytoplasm. Its subcellular location is the cytosol. It is found in the cytoplasmic granule. In terms of biological role, regulates immune responses through the recognition of cell-surface glycans. Essential for the anergy and suppressive function of CD25-positive regulatory T-cells (Treg). This is Galectin-10 (CLC) from Pongo pygmaeus (Bornean orangutan).